The chain runs to 87 residues: U3-theraphotoxin-Hhn1a 3 (87 aa).

An N-terminal signal peptide occupies residues 1–24; the sequence is MVNMKASMFLTFAGLVLLFVVCYA. A propeptide spanning residues 25–52 is cleaved from the precursor; the sequence is PESEEKEFPKEMLSSIFAVDNDFKQEER. Disulfide bonds link Cys-54-Cys-67, Cys-61-Cys-72, and Cys-66-Cys-79.

This sequence belongs to the neurotoxin 10 (Hwtx-1) family. 51 (Hntx-8) subfamily. Hntx-8 sub-subfamily. Expressed by the venom gland.

It localises to the secreted. Functionally, ion channel inhibitor. In Cyriopagopus hainanus (Chinese bird spider), this protein is U3-theraphotoxin-Hhn1a 3.